The primary structure comprises 418 residues: uncharacterized protein (418 aa).

This is an uncharacterized protein from Invertebrate iridescent virus 6 (IIV-6).